Here is a 390-residue protein sequence, read N- to C-terminus: Peroxisomal sarcosine oxidase (390 aa).

9–39 is an FAD binding site; it reads DAIVIGAGIQGCFTAYHLAKHSKSVLLLEQF. Residues Lys126 and Lys287 each carry the N6-acetyllysine modification. S-8alpha-FAD cysteine is present on Cys319. Positions 388-390 match the Microbody targeting signal motif; that stretch reads AHL.

It belongs to the MSOX/MTOX family. FAD serves as cofactor. Kidney and liver.

The protein resides in the peroxisome. It catalyses the reaction sarcosine + O2 + H2O = formaldehyde + glycine + H2O2. The catalysed reaction is L-pipecolate + O2 = L-1-piperideine-6-carboxylate + H2O2 + H(+). Its function is as follows. Metabolizes sarcosine, L-pipecolic acid and L-proline. The chain is Peroxisomal sarcosine oxidase (Pipox) from Mus musculus (Mouse).